The chain runs to 327 residues: Germination protease (327 aa).

The propeptide occupies Met1–Asp7.

Belongs to the peptidase A25 family. Homotetramer. Autoproteolytically processed. The inactive tetrameric zymogen termed p46 autoprocesses to a smaller form termed p41, which is active only during spore germination.

The enzyme catalyses Endopeptidase action with P4 Glu or Asp, P1 preferably Glu &gt; Asp, P1' hydrophobic and P2' Ala.. Its function is as follows. Initiates the rapid degradation of small, acid-soluble proteins during spore germination. This chain is Germination protease, found in Clostridium acetobutylicum (strain ATCC 824 / DSM 792 / JCM 1419 / IAM 19013 / LMG 5710 / NBRC 13948 / NRRL B-527 / VKM B-1787 / 2291 / W).